The chain runs to 326 residues: Beta-ketoacyl-[acyl-carrier-protein] synthase III (326 aa).

Residues cysteine 112 and histidine 251 contribute to the active site. An ACP-binding region spans residues 252–256; sequence QANSR. Asparagine 281 is a catalytic residue.

Belongs to the thiolase-like superfamily. FabH family. In terms of assembly, homodimer.

It localises to the cytoplasm. The catalysed reaction is malonyl-[ACP] + acetyl-CoA + H(+) = 3-oxobutanoyl-[ACP] + CO2 + CoA. Its pathway is lipid metabolism; fatty acid biosynthesis. Functionally, catalyzes the condensation reaction of fatty acid synthesis by the addition to an acyl acceptor of two carbons from malonyl-ACP. Catalyzes the first condensation reaction which initiates fatty acid synthesis and may therefore play a role in governing the total rate of fatty acid production. Possesses both acetoacetyl-ACP synthase and acetyl transacylase activities. Its substrate specificity determines the biosynthesis of branched-chain and/or straight-chain of fatty acids. In Clostridium botulinum (strain Langeland / NCTC 10281 / Type F), this protein is Beta-ketoacyl-[acyl-carrier-protein] synthase III.